The primary structure comprises 76 residues: ATP synthase subunit c (76 aa).

2 consecutive transmembrane segments (helical) span residues 7-27 and 50-70; these read VATALAVGLGAIGPGVGIGII and FIGIAFTEALAIFGLVIAFLI.

This sequence belongs to the ATPase C chain family. F-type ATPases have 2 components, F(1) - the catalytic core - and F(0) - the membrane proton channel. F(1) has five subunits: alpha(3), beta(3), gamma(1), delta(1), epsilon(1). F(0) has four main subunits: a(1), b(1), b'(1) and c(10-14). The alpha and beta chains form an alternating ring which encloses part of the gamma chain. F(1) is attached to F(0) by a central stalk formed by the gamma and epsilon chains, while a peripheral stalk is formed by the delta, b and b' chains.

Its subcellular location is the cell membrane. In terms of biological role, f(1)F(0) ATP synthase produces ATP from ADP in the presence of a proton or sodium gradient. F-type ATPases consist of two structural domains, F(1) containing the extramembraneous catalytic core and F(0) containing the membrane proton channel, linked together by a central stalk and a peripheral stalk. During catalysis, ATP synthesis in the catalytic domain of F(1) is coupled via a rotary mechanism of the central stalk subunits to proton translocation. Its function is as follows. Key component of the F(0) channel; it plays a direct role in translocation across the membrane. A homomeric c-ring of between 10-14 subunits forms the central stalk rotor element with the F(1) delta and epsilon subunits. This is ATP synthase subunit c from Chloroflexus aurantiacus (strain ATCC 29366 / DSM 635 / J-10-fl).